A 257-amino-acid chain; its full sequence is Ribosome-inactivating protein charybdin (257 aa).

Residue glutamate 167 is part of the active site. Cysteines 217 and 254 form a disulfide.

The protein belongs to the ribosome-inactivating protein family. Type 1 RIP subfamily.

The catalysed reaction is Endohydrolysis of the N-glycosidic bond at one specific adenosine on the 28S rRNA.. Its function is as follows. Inhibits translation in rabbit reticulocytes. In Drimia maritima (Sea squill), this protein is Ribosome-inactivating protein charybdin.